The following is an 89-amino-acid chain: MSLTASEKQVLMSEYQVHETDTGSADLQVAILTKRITQLTDHLKQNPKDHASRRGLLKMIGRRRRLLGYINKKDSNRYQTLIKRLGIRR.

It belongs to the universal ribosomal protein uS15 family. As to quaternary structure, part of the 30S ribosomal subunit. Forms a bridge to the 50S subunit in the 70S ribosome, contacting the 23S rRNA.

Its function is as follows. One of the primary rRNA binding proteins, it binds directly to 16S rRNA where it helps nucleate assembly of the platform of the 30S subunit by binding and bridging several RNA helices of the 16S rRNA. In terms of biological role, forms an intersubunit bridge (bridge B4) with the 23S rRNA of the 50S subunit in the ribosome. The polypeptide is Small ribosomal subunit protein uS15 (Crocosphaera subtropica (strain ATCC 51142 / BH68) (Cyanothece sp. (strain ATCC 51142))).